Reading from the N-terminus, the 376-residue chain is Alanine racemase (376 aa).

The active-site Proton acceptor; specific for D-alanine is the Lys-40. An N6-(pyridoxal phosphate)lysine modification is found at Lys-40. Arg-138 is a substrate binding site. Tyr-270 functions as the Proton acceptor; specific for L-alanine in the catalytic mechanism. Substrate is bound at residue Met-317.

The protein belongs to the alanine racemase family. It depends on pyridoxal 5'-phosphate as a cofactor.

The catalysed reaction is L-alanine = D-alanine. Its pathway is amino-acid biosynthesis; D-alanine biosynthesis; D-alanine from L-alanine: step 1/1. In terms of biological role, catalyzes the interconversion of L-alanine and D-alanine. May also act on other amino acids. The polypeptide is Alanine racemase (alr) (Lactobacillus delbrueckii subsp. bulgaricus (strain ATCC BAA-365 / Lb-18)).